A 106-amino-acid polypeptide reads, in one-letter code: UPF0449 protein C19orf25 homolog (106 aa).

Belongs to the UPF0449 family.

The sequence is that of UPF0449 protein C19orf25 homolog from Xenopus tropicalis (Western clawed frog).